The sequence spans 559 residues: DNA ligase (559 aa).

Glu-247 provides a ligand contact to ATP. The active-site N6-AMP-lysine intermediate is Lys-249. ATP contacts are provided by Arg-254, Arg-269, Glu-299, Phe-339, Arg-414, and Lys-420.

It belongs to the ATP-dependent DNA ligase family. Mg(2+) serves as cofactor.

It carries out the reaction ATP + (deoxyribonucleotide)n-3'-hydroxyl + 5'-phospho-(deoxyribonucleotide)m = (deoxyribonucleotide)n+m + AMP + diphosphate.. Functionally, DNA ligase that seals nicks in double-stranded DNA during DNA replication, DNA recombination and DNA repair. The protein is DNA ligase of Pyrococcus abyssi.